A 314-amino-acid polypeptide reads, in one-letter code: Ribosome maturation factor RimP (314 aa).

Disordered stretches follow at residues 1 to 20 (MDLD…QPLS), 152 to 176 (PIEA…AKPE), and 206 to 314 (AAKA…PAPK). A compositionally biased stretch (polar residues) spans 10–19 (PSAQVGQQPL). Residues 215 to 227 (DGNNEEQDEEQEE) show a composition bias toward acidic residues. Polar residues predominate over residues 247–256 (PEHNPAQNPI). 2 stretches are compositionally biased toward basic and acidic residues: residues 270–279 (TEFKKSKTGE) and 303–314 (SGHDMPRKPAPK).

The protein belongs to the RimP family.

Its subcellular location is the cytoplasm. Required for maturation of 30S ribosomal subunits. This Beijerinckia indica subsp. indica (strain ATCC 9039 / DSM 1715 / NCIMB 8712) protein is Ribosome maturation factor RimP.